Reading from the N-terminus, the 37-residue chain is Large ribosomal subunit protein bL36c (37 aa).

This sequence belongs to the bacterial ribosomal protein bL36 family.

Its subcellular location is the plastid. The protein localises to the chloroplast. The chain is Large ribosomal subunit protein bL36c from Chaetosphaeridium globosum (Charophycean green alga).